An 84-amino-acid chain; its full sequence is Toxin Cll9 (84 aa).

An N-terminal signal peptide occupies residues Met-1–Ala-19. The region spanning Glu-20–Lys-83 is the LCN-type CS-alpha/beta domain. Intrachain disulfides connect Cys-31–Cys-82, Cys-35–Cys-58, Cys-44–Cys-63, and Cys-48–Cys-65.

As to expression, expressed by the venom gland.

The protein localises to the secreted. Its function is as follows. Beta toxins bind voltage-independently at site-4 of sodium channels (Nav) and shift the voltage of activation toward more negative potentials thereby affecting sodium channel activation and promoting spontaneous and repetitive firing. Has some action on peripheral ganglia, but not on other sodium channels such as those from cerebellum granular cells in culture. Induces sleep, suggesting a strong antiepileptic action. This is Toxin Cll9 from Centruroides limpidus (Mexican scorpion).